A 536-amino-acid chain; its full sequence is Austinoid biosynthesis cluster protein W (536 aa).

A signal peptide spans 1 to 19 (MKHPTVALLGVGMLGCAAA). Disordered regions lie at residues 141–164 (GSAPSQAAAAPSTGDSRSGLPGFP), 185–220 (SLPGFGGLQGSGPSQAAAAPSTGDSGSGLPGSPGFS), 261–302 (FGVP…ASNG), 385–423 (PGSAPDQGASTPAQAASFPAAGRAGNAIPSASSAPASNG), and 491–536 (PSPT…SSAE). Positions 195 to 208 (SGPSQAAAAPSTGD) are enriched in low complexity. Positions 209-220 (SGSGLPGSPGFS) are enriched in gly residues. 2 stretches are compositionally biased toward low complexity: residues 287-302 (AGNAIPSASSAPASNG) and 408-423 (AGNAIPSASSAPASNG).

It functions in the pathway secondary metabolite biosynthesis; terpenoid biosynthesis. In terms of biological role, part of the gene cluster that mediates the biosynthesis of calidodehydroaustin, a fungal meroterpenoid. The first step of the pathway is the synthesis of 3,5-dimethylorsellinic acid by the polyketide synthase ausA. 3,5-dimethylorsellinic acid is then prenylated by the polyprenyl transferase ausN. Further epoxidation by the FAD-dependent monooxygenase ausM and cyclization by the probable terpene cyclase ausL lead to the formation of protoaustinoid A. Protoaustinoid A is then oxidized to spiro-lactone preaustinoid A3 by the combined action of the FAD-binding monooxygenases ausB and ausC, and the dioxygenase ausE. Acid-catalyzed keto-rearrangement and ring contraction of the tetraketide portion of preaustinoid A3 by ausJ lead to the formation of preaustinoid A4. The aldo-keto reductase ausK, with the help of ausH, is involved in the next step by transforming preaustinoid A4 into isoaustinone which is in turn hydroxylated by the P450 monooxygenase ausI to form austinolide. The cytochrome P450 monooxygenase ausG modifies austinolide to austinol. Austinol is further acetylated to austin by the O-acetyltransferase ausP, which spontaneously changes to dehydroaustin. The cytochrome P450 monooxygenase ausR then converts dehydroaustin is into 7-dehydrodehydroaustin. The hydroxylation catalyzed by ausR permits the O-acetyltransferase ausQ to add an additional acetyl group to the molecule, leading to the formation of acetoxydehydroaustin. The short chain dehydrogenase ausT catalyzes the reduction of the double bond present between carbon atoms 1 and 2 to convert 7-dehydrodehydroaustin into 1,2-dihydro-7-hydroxydehydroaustin. AusQ catalyzes not only an acetylation reaction but also the addition of the PKS ausV diketide product to 1,2-dihydro-7-hydroxydehydroaustin, forming precalidodehydroaustin. Finally, the iron/alpha-ketoglutarate-dependent dioxygenase converts precalidodehydroaustin into calidodehydroaustin. The sequence is that of Austinoid biosynthesis cluster protein W from Aspergillus calidoustus.